We begin with the raw amino-acid sequence, 296 residues long: 4-hydroxybenzoate octaprenyltransferase (296 aa).

A run of 8 helical transmembrane segments spans residues 28 to 48 (PIGI…AGNG), 55 to 75 (VLIF…INDF), 102 to 122 (AVML…CTNA), 145 to 167 (TYYP…FTAA), 174 to 196 (SAWL…YAMV), 219 to 239 (VIIL…GNRF), 241 to 261 (LGGW…WEFW), and 275 to 295 (FLHN…DYAL).

The protein belongs to the UbiA prenyltransferase family. It depends on Mg(2+) as a cofactor.

Its subcellular location is the cell inner membrane. It carries out the reaction all-trans-octaprenyl diphosphate + 4-hydroxybenzoate = 4-hydroxy-3-(all-trans-octaprenyl)benzoate + diphosphate. Its pathway is cofactor biosynthesis; ubiquinone biosynthesis. Its function is as follows. Catalyzes the prenylation of para-hydroxybenzoate (PHB) with an all-trans polyprenyl group. Mediates the second step in the final reaction sequence of ubiquinone-8 (UQ-8) biosynthesis, which is the condensation of the polyisoprenoid side chain with PHB, generating the first membrane-bound Q intermediate 3-octaprenyl-4-hydroxybenzoate. This chain is 4-hydroxybenzoate octaprenyltransferase, found in Pseudomonas entomophila (strain L48).